We begin with the raw amino-acid sequence, 37 residues long: Large ribosomal subunit protein bL36 (37 aa).

This sequence belongs to the bacterial ribosomal protein bL36 family.

The polypeptide is Large ribosomal subunit protein bL36 (Solibacter usitatus (strain Ellin6076)).